Here is a 137-residue protein sequence, read N- to C-terminus: Large ribosomal subunit protein uL16 (137 aa).

The protein belongs to the universal ribosomal protein uL16 family. In terms of assembly, part of the 50S ribosomal subunit.

In terms of biological role, binds 23S rRNA and is also seen to make contacts with the A and possibly P site tRNAs. This chain is Large ribosomal subunit protein uL16, found in Rhodopseudomonas palustris (strain ATCC BAA-98 / CGA009).